Reading from the N-terminus, the 1849-residue chain is Brefeldin A-inhibited guanine nucleotide-exchange protein 1 (1849 aa).

The tract at residues Tyr-2–Arg-224 is DCB; DCB:DCB domain and DCB:HUS domain interaction. Positions Ala-46–Ala-58 are enriched in basic and acidic residues. 4 disordered regions span residues Ala-46–Leu-65, Glu-216–Tyr-248, Leu-267–Thr-302, and Thr-378–Ala-413. Ser-52 is subject to Phosphoserine. Residues Leu-267–Gln-277 show a composition bias toward basic and acidic residues. Phosphoserine is present on residues Ser-286, Ser-289, Ser-290, Ser-397, and Ser-410. Positions Ser-394–Pro-409 are enriched in polar residues. Positions Ala-557–Asn-577 are HUS; DCB:HUS domain interaction. Positions Phe-709–Ser-840 constitute an SEC7 domain. Positions Lys-711–Arg-715 match the Nuclear localization signal (NLS) motif. Ser-1079 bears the Phosphoserine mark. The interval Arg-1543 to Leu-1562 is disordered. Ser-1566 and Ser-1569 each carry phosphoserine.

As to quaternary structure, homodimer. Interacts with ARFGEF2/BIG2; both proteins are probably part of the same or very similar macromolecular complexes. Interacts with FKBP2. Interacts with MYO9B. Interacts with PRKAR1A and PRKAR2A. Interacts with PPP1CC. Interacts with NCL, FBL, NUP62 and U3 small nucleolar RNA. Interacts with DPY30. Interacts with PDE3A. Interacts with KANK1. Interacts with TBC1D22A and TBC1D22B. Interacts (via N-terminus) with ARL1. In terms of processing, phosphorylated. In vitro phosphorylated by PKA reducing its GEF activity and dephosphorylated by phosphatase PP1. As to expression, expressed in placenta, lung, heart, brain, kidney and pancreas.

It is found in the cytoplasm. The protein resides in the perinuclear region. The protein localises to the golgi apparatus. Its subcellular location is the trans-Golgi network membrane. It localises to the nucleus. It is found in the nucleolus. The protein resides in the nucleus matrix. Its activity is regulated as follows. Inhibited by brefeldin A. In terms of biological role, promotes guanine-nucleotide exchange on ARF1 and ARF3. Promotes the activation of ARF1/ARF3 through replacement of GDP with GTP. Involved in vesicular trafficking. Required for the maintenance of Golgi structure; the function may be independent of its GEF activity. Required for the maturation of integrin beta-1 in the Golgi. Involved in the establishment and persistence of cell polarity during directed cell movement in wound healing. Proposed to act as A kinase-anchoring protein (AKAP) and may mediate crosstalk between Arf and PKA pathways. Inhibits GAP activity of MYO9B probably through competitive RhoA binding. The function in the nucleus remains to be determined. The chain is Brefeldin A-inhibited guanine nucleotide-exchange protein 1 (ARFGEF1) from Homo sapiens (Human).